The primary structure comprises 1217 residues: MYIKQVIIQGFRSYRDQTIVDPFSSKHNVIVGRNGSGKSNFFYAIQFVLSDEFSHLRPEQRLALLHEGTGPRVISAFVEIIFDNSDNRLPIDKEEVSLRRVIGAKKDQYFLDKKMVTKNDVMNLLESAGFSRSNPYYIVKQGKINQMATAPDSQRLKLLREVAGTRVYDERKEESISLMKETEGKREKINELLKYIEERLHTLEEEKEELAQYQKWDKMRRALEYTIYNQELNETRAKLDELSAKRETSGEKSRQLRDAQQDARDKMEDIERQVRELKTKISAMKEEKEQLSAERQEQIKQRTKLELKAKDLQDELAGNSEQRKRLLKERQKLLEKIEEKQKELAETEPKFNSVKEKEERGIARLAQATQERTDLYAKQGRGSQFTSKEERDKWIKKELKSLDQAINDKKRQIAAIHKDLEDTEANKEKNLEQYNKLDQDLNEVKARVEELDRKYYEVKNKKDELQSERNYLWREENAEQQALAAKREDLEKKQQLLRAATGKAILNGIDSINKVLDHFRRKGINQHVQNGYHGIVMNNFECEPAFYTCVEVTAGNRLFYHIVDSDEVSTKILMEFNKMNLPGEVTFLPLNKLDVRDTAYPETNDAIPMISKLRYNPRFDKAFKHVFGKTLICRSMEVSTQLARAFTMDCITLEGDQVSHRGALTGGYYDTRKSRLELQKDVRKAEEELGELEAKLNENLRRNIERINNEIDQLMNQMQQIETQQRKFKASRDSILSEMKMLKEKRQQSEKTFMPKQRSLQSLEASLHAMESTRESLKAELGTDLLSQLSLEDQKRVDALNDEIRQLQQENRQLLNERIKLEGIITRVETYLNENLRKRLDQVEQELNELRETEGGTVLTATTSELEAINKRVKDTMARSEDLDNSIDKTEAGIKELQKSMERWKNMEKEHMDAINHDTKELEKMTNRQGMLLKKKEECMKKIRELGSLPQEAFEKYQTLSLKQLFRKLEQCNTELKKYSHVNKKALDQFVNFSEQKEKLIKRQEELDRGYKSIMELMNVLELRKYEAIQLTFKQVSKNFSEVFQKLVPGGKATLVMKKGDVEGSQSQDEGEGSGESERGSGSQSSVPSVDQFTGVGIRVSFTGKQGEMREMQQLSGGQKSLVALALIFAIQKCDPAPFYLFDEIDQALDAQHRKAVSDMIMELAVHAQFITTTFRPELLESADKFYGVKFRNKVSHIDVITAEMAKDFVEDDTTHG.

Position 32-39 (32-39 (GRNGSGKS)) interacts with ATP. N6-acetyllysine occurs at positions 105, 106, and 140. Coiled coils occupy residues 179–350 (MKET…TEPK) and 393–503 (KWIK…ATGK). Positions 242–268 (LSAKRETSGEKSRQLRDAQQDARDKME) are disordered. The region spanning 530–642 (NGYHGIVMNN…CRSMEVSTQL (113 aa)) is the SMC hinge domain. 2 coiled-coil regions span residues 669–916 (YDTR…DAIN) and 958–989 (QTLSLKQLFRKLEQCNTELKKYSHVNKKALDQ). Thr-783 carries the phosphothreonine modification. Ser-787 and Ser-886 each carry phosphoserine. Ser-1013, Ser-1065, Ser-1067, Ser-1074, and Ser-1083 each carry phosphoserine. The segment at 1059–1090 (KGDVEGSQSQDEGEGSGESERGSGSQSSVPSV) is disordered. Lys-1190 is modified (N6-acetyllysine).

It belongs to the SMC family. SMC3 subfamily. As to quaternary structure, forms a heterodimer with SMC1A or SMC1B in cohesin complexes. Cohesin complexes are composed of the SMC1 (SMC1A or SMC1B) and SMC3 heterodimer attached via their SMC hinge domain, RAD21 which link them, and one STAG protein (STAG1, STAG2 or STAG3), which interacts with RAD21. Also found in meiosis-specific cohesin complexes. Found in a complex with SMC1A, CDCA5 and RAD21, PDS5A/SCC-112 and PDS5B/APRIN. Interacts with NUMA1, and forms a ternary complex with KIF3B and KIFAP3, suggesting a function in tethering the chromosomes to the spindle pole and in chromosome movement. Interacts with PDS5A and WAPL; regulated by SMC3 acetylation. Interacts (via SMC hinge domain) with KIAA1328 (via N- and C-terminal domains). Interacts with DDX11. Found in a cohesin complex with SMC1A, STAG1 and RAD21. The cohesin complex interacts with the cohesin loading complex subunits NIPBL/Scc2 (via HEAT repeats) and MAU2/Scc4. NIPBL directly contacts all members of the complex, RAD21, SMC1A/B, SMC3 and STAG1. Interacts with MXI1, MXD3, MXD4, SYCP2, RPGR and STAG3. Interacts with the NuRD complex component HDAC2; the interaction is direct. Ubiquitinated by the DCX(DCAF15) complex, leading to its degradation. In terms of processing, phosphorylated at Ser-1083 in a SPO11-dependent manner. Post-translationally, acetylation at Lys-105 and Lys-106 by ESCO1 is important for genome stability and S phase sister chromatid cohesion. Regulated by DSCC1, it is required for processive DNA synthesis, coupling sister chromatid cohesion establishment during S phase to DNA replication. Deacetylation by HDAC8, regulates release of the cohesin complex from chromatin.

It is found in the nucleus. The protein localises to the chromosome. Its subcellular location is the centromere. In terms of biological role, central component of cohesin, a complex required for chromosome cohesion during the cell cycle. The cohesin complex may form a large proteinaceous ring within which sister chromatids can be trapped. At anaphase, the complex is cleaved and dissociates from chromatin, allowing sister chromatids to segregate. Cohesion is coupled to DNA replication and is involved in DNA repair. The cohesin complex also plays an important role in spindle pole assembly during mitosis and in chromosomes movement. The chain is Structural maintenance of chromosomes protein 3 (SMC3) from Homo sapiens (Human).